Here is a 353-residue protein sequence, read N- to C-terminus: Trans-enoyl reductase RAP2 (353 aa).

Residue 46 to 49 (CDHK) coordinates NADP(+). 131–138 (TGLSTIGM) contacts substrate. NADP(+) is bound by residues 189-192 (SPRN), Tyr-207, and 254-255 (LE). Residue 274-278 (GMALL) coordinates substrate. 343–344 (VS) contacts NADP(+).

Belongs to the zinc-containing alcohol dehydrogenase family. As to quaternary structure, monomer.

It functions in the pathway secondary metabolite biosynthesis. Its function is as follows. Trans-enoyl reductase; part of the gene cluster that mediates the biosynthesis of a tyrosine-derived cytochalasan acting as a fungal signal recognized by resistant rice plants and leads to avirulence in Pi33 resistant rice cultivars. The first step in the pathway is catalyzed by the hybrid PKS-NRPS ACE1, assisted by the enoyl reductase RAP1, that are responsible for fusion of the tyrosine precursor and the polyketide backbone. The polyketide synthase module (PKS) of ACE1 is responsible for the synthesis of the polyketide backbone and the downstream nonribosomal peptide synthetase (NRPS) amidates the carboxyl end of the polyketide with the tyrosine precursor. Because ACE1 lacks a designated enoylreductase (ER) domain, the required activity is provided the enoyl reductase RAP1. Reduction by the hydrolyase ORFZ, followed by dehydration and intra-molecular Diels-Alder cyclization by the Diels-Alderase ORF3 then yield the required isoindolone-fused macrocycle. A number of oxidative steps catalyzed by the tailoring enzymes identified within the cluster, including cytochrome P450 monooxygenases CYP1 to CYP4, the FAD-linked oxidoreductase OXR2 and the short-chain dehydrogenase/reductase OXR1, are further required to afford the final cytochalasans that confer avirulence and which have still to be identified. The monooxygenase CYP1 has been shown to be a site-selective C-18 hydroxylase whereas the function of CYP3 is the site-selective epoxidation of the C-6/C-7 olefin that is present in some intermediate compounds. Finally, SYN2 and RAP2 are not required for avirulence in Pi33 resistant rice cultivars. The sequence is that of Trans-enoyl reductase RAP2 from Pyricularia oryzae (strain 70-15 / ATCC MYA-4617 / FGSC 8958) (Rice blast fungus).